Reading from the N-terminus, the 222-residue chain is Histidine biosynthesis bifunctional protein HisIE (222 aa).

The tract at residues Met1–Ala128 is phosphoribosyl-AMP cyclohydrolase. Residues Cys129–His222 are phosphoribosyl-ATP pyrophosphohydrolase.

It in the N-terminal section; belongs to the PRA-CH family. This sequence in the C-terminal section; belongs to the PRA-PH family.

It localises to the cytoplasm. It catalyses the reaction 1-(5-phospho-beta-D-ribosyl)-ATP + H2O = 1-(5-phospho-beta-D-ribosyl)-5'-AMP + diphosphate + H(+). The catalysed reaction is 1-(5-phospho-beta-D-ribosyl)-5'-AMP + H2O = 1-(5-phospho-beta-D-ribosyl)-5-[(5-phospho-beta-D-ribosylamino)methylideneamino]imidazole-4-carboxamide. It participates in amino-acid biosynthesis; L-histidine biosynthesis; L-histidine from 5-phospho-alpha-D-ribose 1-diphosphate: step 2/9. The protein operates within amino-acid biosynthesis; L-histidine biosynthesis; L-histidine from 5-phospho-alpha-D-ribose 1-diphosphate: step 3/9. This chain is Histidine biosynthesis bifunctional protein HisIE, found in Parasynechococcus marenigrum (strain WH8102).